A 370-amino-acid chain; its full sequence is Protein STRICTOSIDINE SYNTHASE-LIKE 4 (370 aa).

The first 21 residues, 1 to 21, serve as a signal peptide directing secretion; the sequence is MVLFFSTRFLFFSIFFPCLIS. N-linked (GlcNAc...) asparagine glycosylation is present at asparagine 101. Tyrosine 303 is subject to Phosphotyrosine.

The protein belongs to the strictosidine synthase family.

The protein localises to the vacuole. The chain is Protein STRICTOSIDINE SYNTHASE-LIKE 4 from Arabidopsis thaliana (Mouse-ear cress).